The chain runs to 306 residues: tRNA pseudouridine synthase B (306 aa).

Catalysis depends on Asp39, which acts as the Nucleophile.

It belongs to the pseudouridine synthase TruB family. Type 1 subfamily.

It catalyses the reaction uridine(55) in tRNA = pseudouridine(55) in tRNA. In terms of biological role, responsible for synthesis of pseudouridine from uracil-55 in the psi GC loop of transfer RNAs. This chain is tRNA pseudouridine synthase B, found in Arthrobacter sp. (strain FB24).